Here is a 935-residue protein sequence, read N- to C-terminus: Progesterone receptor (935 aa).

The interval 1 to 49 is disordered; the sequence is MTELKAKGLRAPHVAGSPSSPKVGSPLPCRQATGQFPGSQTSDTLPEVS. Residues 1-164 are AF3; mediates transcriptional activation; that stretch reads MTELKAKGLR…PATQRVLSPL (164 aa). The interval 1 to 568 is modulating, Pro-Rich; sequence MTELKAKGLR…YSFESLPQKI (568 aa). Position 20 is a phosphoserine (S20). Over residues 32–44 the composition is skewed to polar residues; the sequence is ATGQFPGSQTSDT. Residues 55 to 59 carry the LXXL motif 1 motif; the sequence is LDGLL. The interval 62–158 is disordered; it reads RICQAQDPPD…EDPPAAPATQ (97 aa). At S81 the chain carries Phosphoserine. The short motif at 115–119 is the LXXL motif 2 element; that stretch reads LDTLW. Phosphoserine occurs at positions 130 and 162. The interval 165-305 is mediates transcriptional transrepression; that stretch reads MSRSGGKAGD…LATTVTDFIH (141 aa). The short motif at 183 to 187 is the Nuclear localization signal element; sequence KVLPR. Residues 187 to 233 form a disordered region; the sequence is RGLSPSRQLLLPTSGSPHWSGAPVKPSPQPAAVEVEEEDGSESEDSA. S190 carries the phosphoserine modification. The span at 191 to 203 shows a compositional bias: polar residues; sequence PSRQLLLPTSGSP. At S213 the chain carries Phosphoserine. The segment covering 220-231 has biased composition (acidic residues); the sequence is EVEEEDGSESED. Phosphoserine; by MAPK1 is present on S294. A disordered region spans residues 328–365; the sequence is SYDGGSGAASAFAPPRSSPSASSTPVPGSDFPDCAYAP. Low complexity predominate over residues 335 to 356; it reads AASAFAPPRSSPSASSTPVPGS. The residue at position 345 (S345) is a Phosphoserine; by MAPK. A Glycyl lysine isopeptide (Lys-Gly) (interchain with G-Cter in SUMO); alternate cross-link involves residue K388. A Glycyl lysine isopeptide (Lys-Gly) (interchain with G-Cter in ubiquitin); alternate cross-link involves residue K388. The interval 390-452 is disordered; sequence EEEGAEASTR…PASASVSSAS (63 aa). S400 is subject to Phosphoserine; by CDK2. Positions 418-433 are enriched in pro residues; that stretch reads PLGPPPPLPPRAPPSR. Positions 434 to 452 are enriched in low complexity; the sequence is PGEAAVTAAPASASVSSAS. Residues 456–548 are AF1; mediates transcriptional activation; it reads STLECILYKA…VYPPYLNYLR (93 aa). A Glycyl lysine isopeptide (Lys-Gly) (interchain with G-Cter in SUMO) cross-link involves residue K533. 2 NR C4-type zinc fingers span residues 569-589 and 605-629; these read CLICGDEASGCHYGVLTCGSC and CAGRNDCIVDKIRRKNCPACRLRKC. The nuclear receptor DNA-binding region spans 569 to 641; it reads CLICGDEASG…AGMVLGGRKF (73 aa). S678 carries the post-translational modification Phosphoserine. The region spanning 681-915 is the NR LBD domain; sequence QDIQLIPPLI…EFPEMMSEVI (235 aa). An AF2; mediates transcriptional activation region spans residues 689–935; that stretch reads LINLLLSIEP…MVKPLLFHKK (247 aa). R768 provides a ligand contact to progesterone.

The protein belongs to the nuclear hormone receptor family. As to quaternary structure, interacts with SMARD1 and UNC45A. Interacts with CUEDC2; the interaction promotes ubiquitination, decreases sumoylation, and represses transcriptional activity. Interacts with PIAS3; the interaction promotes sumoylation of PR in a hormone-dependent manner, inhibits DNA-binding, and alters nuclear export. Interacts with SP1; the interaction requires ligand-induced phosphorylation on Ser-345 by ERK1/2-MAPK. Interacts with PRMT2. Interacts with NCOA2 and NCOA1. Interacts with KLF9. Interacts with GTF2B. Phosphorylated on multiple serine sites. Several of these sites are hormone-dependent. Phosphorylation on Ser-294 is highly hormone-dependent and modulates ubiquitination and sumoylation on Lys-388. Phosphorylation on Ser-345 also requires induction by hormone. Basal phosphorylation on Ser-81, Ser-162, Ser-190 and Ser-400 is increased in response to progesterone and can be phosphorylated in vitro by the CDK2-A1 complex. Increased levels of phosphorylation on Ser-400 also in the presence of EGF, heregulin, IGF, PMA and FBS. Phosphorylation at this site by CDK2 is ligand-independent, and increases nuclear translocation and transcriptional activity. Phosphorylation at Ser-162 and Ser-294, but not at Ser-190, is impaired during the G(2)/M phase of the cell cycle. Phosphorylation on Ser-345 by ERK1/2 MAPK is required for interaction with SP1. Post-translationally, sumoylation is hormone-dependent and represses transcriptional activity. Sumoylation on all three sites is enhanced by PIAS3. Desumoylated by SENP1. Sumoylation on Lys-388, the main site of sumoylation, is repressed by ubiquitination on the same site, and modulated by phosphorylation at Ser-294. In terms of processing, ubiquitination is hormone-dependent and represses sumoylation on the same site. Promoted by MAPK-mediated phosphorylation on Ser-294. Ubiquitinated by UBR5, leading to its degradation: UBR5 specifically recognizes and binds ligand-bound PGR when it is not associated with coactivators (NCOAs). In presence of NCOAs, the UBR5-degron is not accessible, preventing its ubiquitination and degradation. Palmitoylated by ZDHHC7 and ZDHHC21. Palmitoylation is required for plasma membrane targeting and for rapid intracellular signaling via ERK and AKT kinases and cAMP generation.

The protein localises to the nucleus. Its subcellular location is the cytoplasm. The steroid hormones and their receptors are involved in the regulation of eukaryotic gene expression and affect cellular proliferation and differentiation in target tissues. Transcriptional activator of several progesteron-dependent promoters in a variety of cell types. Involved in activation of SRC-dependent MAPK signaling on hormone stimulation. This is Progesterone receptor (PGR) from Sapajus apella (Brown-capped capuchin).